Consider the following 478-residue polypeptide: Secretogranin-3 (478 aa).

Positions 1 to 21 (MASKRLGFVVVLALVCQHINA) are cleaved as a signal peptide. 2 disordered regions span residues 22 to 126 (FPTP…NGMD) and 208 to 287 (IGDR…EDGL). Basic and acidic residues predominate over residues 28–42 (PDDKYNRELTEEKPL). Acidic residues predominate over residues 63–74 (AEEETNSEDDDI). Basic and acidic residues predominate over residues 97–120 (ANERLGADDTDSTKNRRLADDYDS). The span at 235–259 (DEEDEVENEGGDDANGDEPQEEESR) shows a compositional bias: acidic residues.

The protein resides in the cytoplasmic vesicle. It localises to the secretory vesicle lumen. It is found in the secretory vesicle membrane. The protein localises to the secreted. The sequence is that of Secretogranin-3 (scg3) from Danio rerio (Zebrafish).